The primary structure comprises 323 residues: Mitochondrial glutamate carrier 1 (323 aa).

Solcar repeat units follow at residues 6–93 (ISLP…FRHQ), 101–214 (LTLP…LNQL), and 223–312 (SPFY…GIAE). A run of 6 helical transmembrane segments spans residues 12–32 (LING…IDLA), 62–82 (YFGM…EKAI), 107–127 (MLAG…MEML), 189–209 (GLGA…PLFA), 223–243 (SPFY…AVAV), and 292–312 (ALVI…GIAE).

It belongs to the mitochondrial carrier (TC 2.A.29) family. Detected in insulin-secreting beta-cells and pancreatic islets (at the protein level).

The protein localises to the mitochondrion inner membrane. The catalysed reaction is L-glutamate(in) + H(+)(in) = L-glutamate(out) + H(+)(out). In terms of biological role, mitochondrial glutamate/H(+) symporter. Responsible for the transport of glutamate from the cytosol into the mitochondrial matrix with the concomitant import of a proton. Plays a role in the control of glucose-stimulated insulin secretion. The sequence is that of Mitochondrial glutamate carrier 1 from Rattus norvegicus (Rat).